We begin with the raw amino-acid sequence, 426 residues long: Serine--tRNA ligase (426 aa).

Position 233–235 (Thr-233–Glu-235) interacts with L-serine. ATP is bound at residue Arg-264–Glu-266. Glu-287 lines the L-serine pocket. Glu-351–Ser-354 lines the ATP pocket. Ser-387 is an L-serine binding site.

This sequence belongs to the class-II aminoacyl-tRNA synthetase family. Type-1 seryl-tRNA synthetase subfamily. In terms of assembly, homodimer. The tRNA molecule binds across the dimer.

It is found in the cytoplasm. The enzyme catalyses tRNA(Ser) + L-serine + ATP = L-seryl-tRNA(Ser) + AMP + diphosphate + H(+). It carries out the reaction tRNA(Sec) + L-serine + ATP = L-seryl-tRNA(Sec) + AMP + diphosphate + H(+). It participates in aminoacyl-tRNA biosynthesis; selenocysteinyl-tRNA(Sec) biosynthesis; L-seryl-tRNA(Sec) from L-serine and tRNA(Sec): step 1/1. Catalyzes the attachment of serine to tRNA(Ser). Is also able to aminoacylate tRNA(Sec) with serine, to form the misacylated tRNA L-seryl-tRNA(Sec), which will be further converted into selenocysteinyl-tRNA(Sec). The polypeptide is Serine--tRNA ligase (Ectopseudomonas mendocina (strain ymp) (Pseudomonas mendocina)).